The following is an 88-amino-acid chain: Large ribosomal subunit protein bL27 (88 aa).

The tract at residues 1-24 (MATKKSGGSSGNGRDSRGRRLGVK) is disordered.

It belongs to the bacterial ribosomal protein bL27 family.

The protein is Large ribosomal subunit protein bL27 of Ehrlichia chaffeensis (strain ATCC CRL-10679 / Arkansas).